Consider the following 176-residue polypeptide: Large ribosomal subunit protein uL16 (176 aa).

It belongs to the universal ribosomal protein uL16 family.

The chain is Large ribosomal subunit protein uL16 from Halorubrum lacusprofundi (strain ATCC 49239 / DSM 5036 / JCM 8891 / ACAM 34).